A 237-amino-acid chain; its full sequence is Leucyl/phenylalanyl-tRNA--protein transferase (237 aa).

It belongs to the L/F-transferase family.

The protein resides in the cytoplasm. It catalyses the reaction N-terminal L-lysyl-[protein] + L-leucyl-tRNA(Leu) = N-terminal L-leucyl-L-lysyl-[protein] + tRNA(Leu) + H(+). The enzyme catalyses N-terminal L-arginyl-[protein] + L-leucyl-tRNA(Leu) = N-terminal L-leucyl-L-arginyl-[protein] + tRNA(Leu) + H(+). The catalysed reaction is L-phenylalanyl-tRNA(Phe) + an N-terminal L-alpha-aminoacyl-[protein] = an N-terminal L-phenylalanyl-L-alpha-aminoacyl-[protein] + tRNA(Phe). In terms of biological role, functions in the N-end rule pathway of protein degradation where it conjugates Leu, Phe and, less efficiently, Met from aminoacyl-tRNAs to the N-termini of proteins containing an N-terminal arginine or lysine. The polypeptide is Leucyl/phenylalanyl-tRNA--protein transferase (Aromatoleum aromaticum (strain DSM 19018 / LMG 30748 / EbN1) (Azoarcus sp. (strain EbN1))).